Reading from the N-terminus, the 510-residue chain is NAD(P)H-quinone oxidoreductase subunit 2, chloroplastic (510 aa).

Helical transmembrane passes span 24–44 (LLLF…GLIL), 59–79 (WFYF…LFRW), 99–119 (IFQF…VEYI), 124–144 (MAIT…MFLC), 149–169 (LITI…LSGY), 183–203 (YLLM…WLYG), 295–315 (WHLL…LIAI), 323–343 (MLAY…IVGD), 347–367 (GYAS…GTFA), 395–415 (ALSS…AGFF), and 418–438 (LYLF…IGLL).

It belongs to the complex I subunit 2 family. NDH is composed of at least 16 different subunits, 5 of which are encoded in the nucleus.

The protein localises to the plastid. Its subcellular location is the chloroplast thylakoid membrane. The catalysed reaction is a plastoquinone + NADH + (n+1) H(+)(in) = a plastoquinol + NAD(+) + n H(+)(out). The enzyme catalyses a plastoquinone + NADPH + (n+1) H(+)(in) = a plastoquinol + NADP(+) + n H(+)(out). In terms of biological role, NDH shuttles electrons from NAD(P)H:plastoquinone, via FMN and iron-sulfur (Fe-S) centers, to quinones in the photosynthetic chain and possibly in a chloroplast respiratory chain. The immediate electron acceptor for the enzyme in this species is believed to be plastoquinone. Couples the redox reaction to proton translocation, and thus conserves the redox energy in a proton gradient. The polypeptide is NAD(P)H-quinone oxidoreductase subunit 2, chloroplastic (Asparagus officinalis (Garden asparagus)).